Reading from the N-terminus, the 246-residue chain is Large ribosomal subunit protein uL30 (246 aa).

Methionine 1 carries the N-acetylmethionine modification. 4 consecutive repeat copies span residues 7 to 17 (KKVPSVPESLL), 18 to 28 (KRRQAYAAAKA), 29 to 40 (KRLKRLLAQKKF), and 41 to 52 (RKAQRKIIYERA). Residues 7-52 (KKVPSVPESLLKRRQAYAAAKAKRLKRLLAQKKFRKAQRKIIYERA) are 4 X 12 AA tandem repeats.

This sequence belongs to the universal ribosomal protein uL30 family. In terms of assembly, component of the large ribosomal subunit.

It is found in the cytoplasm. Component of the large ribosomal subunit. The ribosome is a large ribonucleoprotein complex responsible for the synthesis of proteins in the cell. Binds to G-rich structures in 28S rRNA and in mRNAs. Plays a regulatory role in the translation apparatus; inhibits cell-free translation of mRNAs. The sequence is that of Large ribosomal subunit protein uL30 (RPL7) from Gallus gallus (Chicken).